The following is a 387-amino-acid chain: 3-ketoacyl-CoA thiolase (387 aa).

C91 serves as the catalytic Acyl-thioester intermediate. Active-site proton acceptor residues include H343 and C373.

It belongs to the thiolase-like superfamily. Thiolase family. Heterotetramer of two alpha chains (FadB) and two beta chains (FadA).

Its subcellular location is the cytoplasm. The catalysed reaction is an acyl-CoA + acetyl-CoA = a 3-oxoacyl-CoA + CoA. Its pathway is lipid metabolism; fatty acid beta-oxidation. Its function is as follows. Catalyzes the final step of fatty acid oxidation in which acetyl-CoA is released and the CoA ester of a fatty acid two carbons shorter is formed. The sequence is that of 3-ketoacyl-CoA thiolase from Erwinia tasmaniensis (strain DSM 17950 / CFBP 7177 / CIP 109463 / NCPPB 4357 / Et1/99).